Consider the following 333-residue polypeptide: MSINVTEIVLHQIHQTEGETPELNTVLRDNLLAISPEVEQMMLQLHQAYQSKAKAYGIFKNESIFAQQLNRLLEQETDFLPFSHSCAKMLSSELAKYPFASGGTFILCRYNFLATDYLFIALIDSRTSMLVDDQLEIKRTEYLDITQYDIACRINLTELKINAQSNRYLTFIKGRVGRKIADFFMDFLSAEEGLNPQLQNQTLLQAVSDYCDQGELSAPQTREVKKQVFEYCKGQINSGEEIALSELSEALPTLNEVDFAQFTQEQEYGLEENIPPVRNALKTLTKYSGSGKGVTISFNADLLGERLIWDELNDTLTIKGLPANLRDQLARNK.

The protein belongs to the YejK family.

The protein localises to the cytoplasm. Its subcellular location is the nucleoid. This Actinobacillus pleuropneumoniae serotype 3 (strain JL03) protein is Nucleoid-associated protein APJL_0454.